A 523-amino-acid chain; its full sequence is MNNIHNHKILILDFGSQYTQLIARRVREIGVYCELWAWDVSEADIREFNPTGIILSGGPESTTEENSPRAPEYVFNAGVPVLGICYGMQTMAMQLGGLTETSTHREFGYASVNLKAADALFAQLNDDVTSSQPKLDVWMSHGDKVTRLPDHFQVTAMTSTCPIAAMSDERRRFYGVQFHPEVTHTKSGLELLTNFVVKICGCERNWTPENIIEDAVARLKAQVGDDEVILGLSGGVDSSVTALLLHRAIGKNLHCVFVDNGLLRLNEAEQVMEMFGDKFGLNIIHVKAEDRFLDALKGIDEPEAKRKMIGKVFVDVFDDESKKLTSVKWLAQGTIYPDVIESAASKTGKAHVIKSHHNVGGLPDYMKLGLVEPLRELFKDEVRKIGLALGLPAEMLNRHPFPGPGLGVRVLGEIKKEYCDLVRLADAIFMEELHASGWYYKVSQAFTVFLPVKSVGVMGDGRKYDWVVSLRAVETIDFMTAHWAHLPYDLLGKISNRIINEVNGISRVVYDVSGKPPATIEWE.

One can recognise a Glutamine amidotransferase type-1 domain in the interval 8–205; that stretch reads KILILDFGSQ…VVKICGCERN (198 aa). Cys85 functions as the Nucleophile in the catalytic mechanism. Active-site residues include His179 and Glu181. In terms of domain architecture, GMPS ATP-PPase spans 206 to 398; it reads WTPENIIEDA…LGLPAEMLNR (193 aa). Position 233–239 (233–239) interacts with ATP; the sequence is SGGVDSS.

Homodimer.

It catalyses the reaction XMP + L-glutamine + ATP + H2O = GMP + L-glutamate + AMP + diphosphate + 2 H(+). It functions in the pathway purine metabolism; GMP biosynthesis; GMP from XMP (L-Gln route): step 1/1. In terms of biological role, catalyzes the synthesis of GMP from XMP. The chain is GMP synthase [glutamine-hydrolyzing] from Pasteurella multocida (strain Pm70).